A 505-amino-acid chain; its full sequence is Cytochrome P450 monooxygenase FGM1 (505 aa).

A signal peptide spans 1–23 (MPLILSITSSGTVLVLLTLLSLA). Residues Asn188 and Asn351 are each glycosylated (N-linked (GlcNAc...) asparagine). Residue Cys450 coordinates heme.

It belongs to the cytochrome P450 family. It depends on heme as a cofactor.

It functions in the pathway secondary metabolite biosynthesis. Functionally, cytochrome P450 monooxygenase; part of the Fg3_54/C64 gene cluster that mediates the biosynthesis of the octapeptide fusaoctaxin A, a virulence factor that is required for cell-to-cell invasiveness of plant host. The 2 nonribosomal peptide synthetases NRPS9 and NRPS5 form an assembly line which likely utilizes GABA as a starter unit (loaded on the unique module M1 of NRPS9) and sequentially incorporates seven extender units composed of the residues L-Ala, L-allo-Ile, L-Ser, L-Val, L-Ser, L-Leu and L-Leu, respectively. During the process, each of the residues that are tethered on modules M3-M7 of NRPS5 containing an E domain can undergo an epimerization reaction to produce a D-configuration before the transpeptidation reaction occurs. The elongation of the peptidyl chain might be terminated by module M8-mediated L-Leu incorporation, followed by R domain-catalyzed 4 electron reduction to release the resulting octapeptide from the assembly line as an alcohol. Fusaoctaxin A is cleaved by the cluster specific ABC transporter FGM5 to the pentapeptide fusapentaxin A and the tripeptide fusatrixin A. The other enzymes from the cluster, FGM1, FGM2, FGM3 and FGM9 seem not to be involved in the biosynthesis of fusaoctaxin A and their functions have still to be determined. This Gibberella zeae (strain ATCC MYA-4620 / CBS 123657 / FGSC 9075 / NRRL 31084 / PH-1) (Wheat head blight fungus) protein is Cytochrome P450 monooxygenase FGM1.